The following is a 303-amino-acid chain: Quinolinate synthase (303 aa).

Iminosuccinate is bound by residues His24 and Ser41. Cys86 provides a ligand contact to [4Fe-4S] cluster. Iminosuccinate is bound by residues 112-114 and Ser129; that span reads YIN. Position 172 (Cys172) interacts with [4Fe-4S] cluster. Residues 198–200 and Thr215 each bind iminosuccinate; that span reads HPE. Residue Cys260 coordinates [4Fe-4S] cluster.

This sequence belongs to the quinolinate synthase family. Type 2 subfamily. [4Fe-4S] cluster is required as a cofactor.

It localises to the cytoplasm. The enzyme catalyses iminosuccinate + dihydroxyacetone phosphate = quinolinate + phosphate + 2 H2O + H(+). It participates in cofactor biosynthesis; NAD(+) biosynthesis; quinolinate from iminoaspartate: step 1/1. Its function is as follows. Catalyzes the condensation of iminoaspartate with dihydroxyacetone phosphate to form quinolinate. This Caldicellulosiruptor saccharolyticus (strain ATCC 43494 / DSM 8903 / Tp8T 6331) protein is Quinolinate synthase.